The following is a 411-amino-acid chain: Cladofulvin cluster transcriptional coactivator claA (411 aa).

Over residues 1–27 (MSDSLAGNGMRQNLNRSSTSSNHTGHA) the composition is skewed to polar residues. A disordered region spans residues 1–32 (MSDSLAGNGMRQNLNRSSTSSNHTGHAQNGRA). The 71-residue stretch at 47-117 (LACQVQSLAC…DPGHIAHTAL (71 aa)) folds into the HTH iclR-type domain. Positions 77–96 (LHDVAELANVPASQLSRVVR) form a DNA-binding region, H-T-H motif.

It localises to the nucleus. Functionally, transcriptional coactivator; part of the gene cluster that mediates the biosynthesis of cladofulvin, a conidial pigment not required for virulence but that plays a role in fitness and resistance to environmental stresses including UV light and low-temperature stress. With claE, coregulates the production of cladofulvin. The protein is Cladofulvin cluster transcriptional coactivator claA of Passalora fulva (Tomato leaf mold).